Here is a 378-residue protein sequence, read N- to C-terminus: Acetylornithine deacetylase (378 aa).

Position 76 (H76) interacts with Zn(2+). Residue D78 is part of the active site. D108 is a binding site for Zn(2+). The active site involves E140. Positions 141, 165, and 351 each coordinate Zn(2+).

Belongs to the peptidase M20A family. ArgE subfamily. In terms of assembly, homodimer. Zn(2+) serves as cofactor. Co(2+) is required as a cofactor. The cofactor is glutathione.

The protein resides in the cytoplasm. It carries out the reaction N(2)-acetyl-L-ornithine + H2O = L-ornithine + acetate. The protein operates within amino-acid biosynthesis; L-arginine biosynthesis; L-ornithine from N(2)-acetyl-L-ornithine (linear): step 1/1. Catalyzes the hydrolysis of the amide bond of N(2)-acetylated L-amino acids. Cleaves the acetyl group from N-acetyl-L-ornithine to form L-ornithine, an intermediate in L-arginine biosynthesis pathway, and a branchpoint in the synthesis of polyamines. The sequence is that of Acetylornithine deacetylase from Vibrio atlanticus (strain LGP32) (Vibrio splendidus (strain Mel32)).